The primary structure comprises 670 residues: ATP-dependent DNA helicase Rep (670 aa).

The 277-residue stretch at 1-277 (MLFNEHQKKA…IIMQHNYRSS (277 aa)) folds into the UvrD-like helicase ATP-binding domain. ATP contacts are provided by residues 22–29 (AGAGSGKT) and Arg-275. The UvrD-like helicase C-terminal domain maps to 278 to 562 (GRILKVANAL…QLMTLHASKG (285 aa)).

This sequence belongs to the helicase family. UvrD subfamily. As to quaternary structure, homodimer.

It catalyses the reaction Couples ATP hydrolysis with the unwinding of duplex DNA by translocating in the 3'-5' direction.. The enzyme catalyses ATP + H2O = ADP + phosphate + H(+). In terms of biological role, rep helicase is a single-stranded DNA-dependent ATPase involved in DNA replication; it can initiate unwinding at a nick in the DNA. It binds to the single-stranded DNA and acts in a progressive fashion along the DNA in the 3' to 5' direction. This chain is ATP-dependent DNA helicase Rep, found in Buchnera aphidicola subsp. Baizongia pistaciae (strain Bp).